We begin with the raw amino-acid sequence, 604 residues long: MKCAHFIDGPHCVKACPAGVLGENDTLVRKYADANAVCQLCHPNCTRGCKGPGLEGCPNGSKTPSIAAGVVGGLLCLVVVGLGIGLYLRRRHIVRKRTLRRLLQERELVEPLTPSGEAPNQAHLRILKETEFKKVKVLGSGAFGTIYKGLWIPEGEKVKIPVAIKELREATSPKANKEILDEAYVMASVDNPHVCRLLGICLTSTVQLITQLMPYGCLLDYIREHKDNIGSQYLLNWCVQIAKGMNYLEERRLVHRDLAARNVLVKTPQHVKITDFGLAKLLGADEKEYHAEGGKVPIKWMALESILHRIYTHQSDVWSYGVTVWELMTFGSKPYDGIPASEISSVLEKGERLPQPPICTIDVYMIMVKCWMIDADSRPKFRELIAEFSKMARDPPRYLVIQGDERMHLPSPTDSKFYRTLMEEEDMEDIVDADEYLVPHQGFFNSPSTSRTPLLSSLSATSNNSATNCIDRNGQGHPVREDSFVQRYSSDPTGNFLEESIDDGFLPAPEYVNQLMPKKPSTAMVQNQIYNFISLTAISKLPMDSRYQNSHSTAVDNPEYLNTNQSPLAKTVFESSPYWIQSGNHQINLDNPDYQQDFLPTSCS.

One can recognise a Protein kinase domain in the interval 132-399 (FKKVKVLGSG…KMARDPPRYL (268 aa)). ATP is bound by residues 138–146 (LGSGAFGTI) and Lys165. Catalysis depends on Asp257, which acts as the Proton acceptor.

The protein belongs to the protein kinase superfamily. Tyr protein kinase family. EGF receptor subfamily.

The enzyme catalyses L-tyrosyl-[protein] + ATP = O-phospho-L-tyrosyl-[protein] + ADP + H(+). Its function is as follows. The v-erbB oncogene transforms avian fibroblasts and erythroblasts in culture and induces sarcomas and erythroleukemias in chickens. It is a truncated and mutated version of the receptor for epidermal growth factor. The protein is Tyrosine-protein kinase transforming protein erbB (V-ERBB) of Galliformes.